The sequence spans 91 residues: Probable translocation protein y4yM (91 aa).

2 helical membrane passes run valine 15–isoleucine 35 and leucine 55–glutamate 75.

It belongs to the FliQ/MopD/SpaQ family.

It localises to the cell membrane. Could be involved in the secretion of an unknown factor. The polypeptide is Probable translocation protein y4yM (Sinorhizobium fredii (strain NBRC 101917 / NGR234)).